The sequence spans 375 residues: UDP-N-acetylglucosamine--N-acetylmuramyl-(pentapeptide) pyrophosphoryl-undecaprenol N-acetylglucosamine transferase (375 aa).

UDP-N-acetyl-alpha-D-glucosamine is bound by residues 13-15, Asn124, Arg165, Ser193, and Gln294; that span reads TGG.

This sequence belongs to the glycosyltransferase 28 family. MurG subfamily.

The protein localises to the cell inner membrane. The enzyme catalyses di-trans,octa-cis-undecaprenyl diphospho-N-acetyl-alpha-D-muramoyl-L-alanyl-D-glutamyl-meso-2,6-diaminopimeloyl-D-alanyl-D-alanine + UDP-N-acetyl-alpha-D-glucosamine = di-trans,octa-cis-undecaprenyl diphospho-[N-acetyl-alpha-D-glucosaminyl-(1-&gt;4)]-N-acetyl-alpha-D-muramoyl-L-alanyl-D-glutamyl-meso-2,6-diaminopimeloyl-D-alanyl-D-alanine + UDP + H(+). Its pathway is cell wall biogenesis; peptidoglycan biosynthesis. In terms of biological role, cell wall formation. Catalyzes the transfer of a GlcNAc subunit on undecaprenyl-pyrophosphoryl-MurNAc-pentapeptide (lipid intermediate I) to form undecaprenyl-pyrophosphoryl-MurNAc-(pentapeptide)GlcNAc (lipid intermediate II). This is UDP-N-acetylglucosamine--N-acetylmuramyl-(pentapeptide) pyrophosphoryl-undecaprenol N-acetylglucosamine transferase from Chelativorans sp. (strain BNC1).